Reading from the N-terminus, the 653-residue chain is MDLHTAVYNAARDGKLQLLQKLLSGRSREELEELTGEVASGGTPLLIAARYGHLDVVEYLVDRCGASVEAGGSVHFDGEIIEGAPPLWAASAAGHLDVVRSLLRRGASVNRTTRTNSTPLRAACFDGHLEVVRYLVGEHQADLEVANRHGHTCLMISCYKGHREIARYLLEQGAQVNRRSAKGNTALHDCAESGSLEILQLLLGCNARMERDGYGMTPLLAASVTGHTNIVEYLIQEQPAGDEQAQPGLARVQPQGARSSPEEPPSGESYESCCPTSREAAVEALELLGATYVDKKRDLLGALKHWRRAMELRHQGGEYLPKPEPPQLVLAYDYSREVNTTEELEALITDPDEMRMQALLIRERILGPSHPDTSYYIRYRGAVYADSGNFERCIRLWKYALDMQQNNLEPLSPMTASSFLSFAELFSYVLQDRSAKGSLGTPIGFADLMGVLCKGVREVERALQLPKEPGDSAQFTKALAIILHLLYLLEKVECTPDQEHLKHQTVYRLLKCAPRGKNGFTPLHMAVDAETTNVGRYPVGRFPSLQVVKVLLDCGADPDSRDFDNNTPLHIAAQNNCPGIMNALIEAGAHMDATNAFKKTAYELLDEKLLAKSTIQPFNYVTLQCLAARALDKNKIPYKGFIPEELEAFIELH.

ANK repeat units lie at residues 2–31 (DLHT…REEL), 40–70 (SGGT…SVEA), 82–111 (EGAP…SVNR), 115–145 (TNST…DLEV), 149–178 (HGHT…QVNR), 182–211 (KGNT…RMER), and 214–243 (YGMT…AGDE). A Phosphoserine modification is found at Ser-108. The segment at 242–274 (DEQAQPGLARVQPQGARSSPEEPPSGESYESCC) is disordered. TPR repeat units follow at residues 282 to 316 (VEAL…RHQG) and 374 to 407 (SYYI…QQNN). 2 ANK repeats span residues 518 to 560 (NGFT…DPDS) and 564 to 593 (DNNT…HMDA).

Belongs to the fem-1 family. In terms of assembly, component of a CRL2 E3 ubiquitin-protein ligase complex, also named ECS (Elongin BC-CUL2/5-SOCS-box protein) complex, composed of CUL2, Elongin BC (ELOB and ELOC), RBX1 and substrate-specific adapter FEM1A. Interacts with PTGER4. Interacts with NFKB1; the interaction is direct. Phosphorylated; highly phosphorylated in myoblasts and myotubes. Phosphorylation at Ser-108 promotes PGE2-EP4-mediated inhibition of inflammation. Dephosphorylated by protein phosphatase 2A (PP2A).

It localises to the mitochondrion. The protein localises to the cytoplasm. It participates in protein modification; protein ubiquitination. Functionally, substrate-recognition component of a Cul2-RING (CRL2) E3 ubiquitin-protein ligase complex of the DesCEND (destruction via C-end degrons) pathway, which recognizes a C-degron located at the extreme C terminus of target proteins, leading to their ubiquitination and degradation. The C-degron recognized by the DesCEND pathway is usually a motif of less than ten residues and can be present in full-length proteins, truncated proteins or proteolytically cleaved forms. The CRL2(FEM1A) complex specifically recognizes proteins with an arginine at the C-terminus: recognizes and binds proteins ending with -Lys/Arg-Xaa-Arg and -Lys/Arg-Xaa-Xaa-Arg C-degrons, such as SIL1 or OR51B2, leading to their ubiquitination and degradation. Involved in PGE2-EP4-mediated inhibition of inflammation of macrophages via interaction with NFKB1 and PTGER4. Promotes inflammation in brain microglia through MAP2K4/MKK4-mediated signaling. The protein is Protein fem-1 homolog A of Bos taurus (Bovine).